The sequence spans 1320 residues: MPSGSKSKKKKSKSKGGVKKHAVEKVAPPIEAEIMDERDESDYPTSRVIKRGPNGDVIVESLPDKSTSGKKSKKKGKLSDLEVSESAKQMGITLDSHWESLSPDEKKNILRIEKEEVLEIIRNYQNDHNCSCSVCGRRHMAMNQEMERMYNLLYELEEQRDPDMNPVKFHLGIIKELQISKNKQILDQTEGPNDNTTHEEVVKNFLSSDIADKLKEEVHQFKQKQLSKQECNRPSSLANDNIEEEIPCAQIPQANEEAMTKDIQKTLEQLSVVEPVSKINVIQEDDLGEIKEENKEYLKFTESFISSQPKIAQKFIQKLDENPCMKAITDEVMQNSSYEFLDALKNLWAPNLLKIVESEDDDNLVNLNETLDPIEFTTMLHHGNPLSQQDYYDLQGAISRKVVNAFNFENRKLEHLSPLEVELFGRFMSSDQDNIFHNMLLEAYNERFKEEPFKMMSNIPQIIKAVATLTNLDGRMMDDVDENHFTSEEERYDDDITDYSDSEYEDYDSEYDDIDNGDIISDVDEPFSTLKSDQLRVNYDTNSGNINHSDNYESNSRLREVTDENEENLQYDTPQEKYNYSDHGKDHGTIADEDEDSIDEGYESSIDDMERLEEGRRLIQIAITKLLQGRIMESYHEKEADSNRLKLLKELEEEQMKKKEKEVKKIKKKEKEKEKRRLQQLAKEEEKRKKEEEERSAREEQERREMERREAQRKKVEEAKRKKDEERRRKLEEQRKREEQQEKQRKAKEEQKRKREEEKKKKEELERQLREEELMKKKEEEERLLREKERAEILKKETELAMSMKENHSSQSLSIQNQFFSNPQNSNIGMQNYFNNDLDNTNAGLGNGGPTNLGVRKNSHVLGLTQVYSDKANNSPGKNDDNNEINNEILNIINAATTAKSGSRTSMDMQALLQPPFTDNVNDQIRSSNLINDQASGMNSNGLSTNFHSPYGSNVFSGENQLSNNLQNDILTGLNADTSSTNLASWTSLPALNNLNANQHILSNNQTPLHQQKGTSPISNTMMDTKRDYLGDELSKLTTMLTTNSLNESPAFSSSNLQSSLWNDQNSSGKTPLGSNTTQIPLSQPAFLGTEPPVHRSSIWGDSSASMFNFSQRLSVPTNSNSVSSQTVPNQNIGMGSSFTNPSIWSTGSDFNVPSRDMNSGVAFTNSFSNTSPRNQFALNSGSMLQNQSQRQNIMDNIRLLSNSPQNNGYIPIDLLYQSINKQSTSDFPSFLNNVIDLERSHNYDLVKDQTGVINGVRVGSENRPVSTAFSNFHQNMDPTMKGPEHLSNSIPGTARNFEGNSYLAKEATMNIIPSSSLDR.

Residues 1-22 show a composition bias toward basic residues; it reads MPSGSKSKKKKSKSKGGVKKHA. Disordered stretches follow at residues 1 to 85, 541 to 598, 656 to 766, and 1048 to 1073; these read MPSG…EVSE, TNSG…EDSI, MKKK…EELE, and ESPA…KTPL. The span at 33-42 shows a compositional bias: acidic residues; sequence EIMDERDESD. The segment covering 541–555 has biased composition (polar residues); it reads TNSGNINHSDNYESN. The span at 579–590 shows a compositional bias: basic and acidic residues; sequence NYSDHGKDHGTI. Positions 637 to 807 form a coiled coil; that stretch reads EKEADSNRLK…TELAMSMKEN (171 aa).

This sequence belongs to the NST1 family.

It localises to the cytoplasm. Its function is as follows. May act as a negative regulator of salt tolerance. This Candida glabrata (strain ATCC 2001 / BCRC 20586 / JCM 3761 / NBRC 0622 / NRRL Y-65 / CBS 138) (Yeast) protein is Stress response protein NST1 (NST1).